We begin with the raw amino-acid sequence, 161 residues long: Nucleotide-binding protein Mmwyl1_2033 (161 aa).

The protein belongs to the YajQ family.

Nucleotide-binding protein. This chain is Nucleotide-binding protein Mmwyl1_2033, found in Marinomonas sp. (strain MWYL1).